The following is a 167-amino-acid chain: Phospholipase A2 heteromtoxin (167 aa).

Ca(2+) is bound by residues W38, G40, and G42. Disulfide bonds link C39-C61, C60-C99, C67-C92, C90-C127, and C132-C144. H64 is a catalytic residue. Residue D65 coordinates Ca(2+). Residues 136–140 constitute a propeptide that is removed on maturation; the sequence is GRSAR.

This sequence belongs to the phospholipase A2 family. Group III subfamily. Heterodimer composed of a large and a small subunits; disulfide-linked. It depends on Ca(2+) as a cofactor. As to expression, expressed by the venom gland.

The protein resides in the secreted. The catalysed reaction is a 1,2-diacyl-sn-glycero-3-phosphocholine + H2O = a 1-acyl-sn-glycero-3-phosphocholine + a fatty acid + H(+). Its function is as follows. Phospholipase toxin, which catalyzes the calcium-dependent hydrolysis of the 2-acyl groups in 3-sn-phosphoglycerides. Inhibits both skeletal (RYR1) and cardiac (RYR2) ryanodine receptors (calcium release channels). Probably blocks ryanodine receptors by generating a lipid product. This chain is Phospholipase A2 heteromtoxin, found in Heterometrus laoticus (Thai giant scorpion).